The sequence spans 201 residues: Recombination protein RecR (201 aa).

A C4-type zinc finger spans residues 57–72 (CADCRTFTEQEVCNIC). One can recognise a Toprim domain in the interval 81-176 (GQICVVESPA…EASRIAHGVP (96 aa)).

It belongs to the RecR family.

May play a role in DNA repair. It seems to be involved in an RecBC-independent recombinational process of DNA repair. It may act with RecF and RecO. The polypeptide is Recombination protein RecR (Shigella boydii serotype 18 (strain CDC 3083-94 / BS512)).